A 1268-amino-acid chain; its full sequence is Truncated polyprotein 1aTF (1268 aa).

A C4-type; atypical zinc finger spans residues 8-28 (CMCTPAARVFWNAGQVFCTRC). One can recognise a Peptidase C31 domain in the interval 69 to 180 (ECTPSGCCWL…QPFCPFEEAH (112 aa)). The interval 69 to 182 (ECTPSGCCWL…FCPFEEAHSD (114 aa)) is PCP1-alpha. Active-site for Nsp1-alpha papain-like cysteine proteinase activity residues include Cys-76 and His-146. Positions 269-384 (PNVFDGKCWL…IFRFGAHKWY (116 aa)) are PCP1-beta. Positions 269–385 (PNVFDGKCWL…FRFGAHKWYG (117 aa)) constitute a Peptidase C32 domain. Active-site for Nsp1-beta papain-like cysteine proteinase activity residues include Cys-276 and His-345. Positions 420–527 (TYSPPTDGSC…VGVCSEGCVA (108 aa)) constitute a Peptidase C33 domain. Catalysis depends on for Nsp2 cysteine proteinase activity residues Cys-429 and His-498. Disordered regions lie at residues 728-758 (AIGS…SHPA) and 1027-1064 (SVTP…SHAS). Residues 737-749 (DSKRENMHNSRED) show a composition bias toward basic and acidic residues. 4 helical membrane passes run 1119–1139 (LWLQ…CSVV), 1153–1173 (FLVL…LLLY), 1194–1214 (VMLS…AALW), and 1233–1253 (VISG…FLLF).

Its subcellular location is the host nucleus. The protein localises to the host cytoplasm. It is found in the host endoplasmic reticulum membrane. It localises to the membrane. In terms of biological role, is essential for viral subgenomic mRNA synthesis. Inhibits IFN-beta production. Counteracts the action of NF-kappaB by decreasing the phosphorylation of IkappaB-alpha, such that the degradation of IkappaB-alpha is suppressed. This leads to the blockage of NF-kappaB nuclear translocation and thus interference of NF-kappaB activation. Also seems to inhibit IRF3-dependent pathways. Functionally, nsp1-beta transactivates the programmed ribosomal frameshifting event leading to the expression of the 1aTF polyprotein. This chain is Truncated polyprotein 1aTF, found in Porcine reproductive and respiratory syndrome virus (isolate Pig/United States/SD 01-08/2001) (PRRSV).